We begin with the raw amino-acid sequence, 148 residues long: Endothelial differentiation-related factor 1 homolog (148 aa).

The segment at 1–26 (MAESDWDTVTVLRKKGPSAAQAKSKQ) is disordered. The region spanning 81 to 135 (IQQGRQSKGMTQKDLATKINEKPQVIADYESGRAIPNNQVMGKIERAIGLKLRGK) is the HTH cro/C1-type domain. The H-T-H motif DNA-binding region spans 92–111 (QKDLATKINEKPQVIADYES).

The protein localises to the nucleus. Functionally, probable transcriptional coactivator. The chain is Endothelial differentiation-related factor 1 homolog (EDF1) from Gallus gallus (Chicken).